Reading from the N-terminus, the 104-residue chain is MADYGSDKKSRDNQMRSAINQQLVETGEREKLKELLRVRLAECGWRDQLKQLCKEIVRERGLEHVSVDDLVQDITPKARQLVPDTVKKELLQKIRNFLAQQANV.

The span at 1 to 14 shows a compositional bias: basic and acidic residues; the sequence is MADYGSDKKSRDNQ. The tract at residues 1 to 22 is disordered; it reads MADYGSDKKSRDNQMRSAINQQ.

Belongs to the ENY2 family. Component of the nuclear pore complex (NPC)-associated TREX-2 complex (transcription and export complex 2). Component of the SAGA transcription coactivator-HAT complex. Within the SAGA complex, participates in a subcomplex of SAGA called the DUB module (deubiquitination module).

Its subcellular location is the nucleus. It localises to the nucleoplasm. Involved in mRNA export coupled transcription activation by association with both the TREX-2 and the SAGA complexes. The transcription regulatory histone acetylation (HAT) complex SAGA is a multiprotein complex that activates transcription by remodeling chromatin and mediating histone acetylation and deubiquitination. Within the SAGA complex, participates in a subcomplex that specifically deubiquitinates histones. The SAGA complex is recruited to specific gene promoters by activators, where it is required for transcription. The TREX-2 complex functions in docking export-competent ribonucleoprotein particles (mRNPs) to the nuclear entrance of the nuclear pore complex (nuclear basket). TREX-2 participates in mRNA export and accurate chromatin positioning in the nucleus by tethering genes to the nuclear periphery. The polypeptide is Transcription and mRNA export factor ENY2 (Ciona intestinalis (Transparent sea squirt)).